Reading from the N-terminus, the 146-residue chain is MRNEMNLQFSALSQNESFARVTVAAFIAQLDPTMEELTEIKTVVSEAVTNAIIHGYEGNPEGIVYISVILEEAMVKLTIRDEGVGIFNLDEARQPLFTTKPELERSGMGFTIMENFMDEVEIISNESFGTTIHLTKYLSNSNALCN.

Belongs to the anti-sigma-factor family.

It catalyses the reaction L-seryl-[protein] + ATP = O-phospho-L-seryl-[protein] + ADP + H(+). It carries out the reaction L-threonyl-[protein] + ATP = O-phospho-L-threonyl-[protein] + ADP + H(+). Binds to sigma F and blocks its ability to form an RNA polymerase holoenzyme (E-sigma F). Phosphorylates SpoIIAA on a serine residue. This phosphorylation may enable SpoIIAA to act as an anti-anti-sigma factor that counteracts SpoIIAB and thus releases sigma F from inhibition. This chain is Anti-sigma F factor, found in Bacillus cytotoxicus (strain DSM 22905 / CIP 110041 / 391-98 / NVH 391-98).